The following is a 359-amino-acid chain: MNKGIVDQLTRLSIRLEELDKLLSNEKITADLDNYRKLSRERSEIEPVTRFYHTYQQVEQDLATAMEMSVDPQFRDFAEAEIDADKQKLADIETEILKQLLPRDPNDERNIFLEIRAGTGGDESALFAGDLFRMYSRYAEREGWQVEIVSQNPSEVGGYKEIIARIIGHGAYSRLKFESGAHRVQRVPATETQGRVHTSTCTVAVLPEADEISGVTLNPADLRIDTFRASGAGGQHINKTDSAVRITHLPTGIVAECQEGRSQHKNKAQAMSVLISRILDKQVRAQQAEQAAARKSLVGSGERSERIRTYNFPQGRITDHRINLTLYKIEQIMDGELDELCSTLAAEHQAAQLAAMIER.

Position 235 is an N5-methylglutamine (glutamine 235).

It belongs to the prokaryotic/mitochondrial release factor family. In terms of processing, methylated by PrmC. Methylation increases the termination efficiency of RF1.

It localises to the cytoplasm. Its function is as follows. Peptide chain release factor 1 directs the termination of translation in response to the peptide chain termination codons UAG and UAA. The chain is Peptide chain release factor 1 from Nitrosomonas eutropha (strain DSM 101675 / C91 / Nm57).